Reading from the N-terminus, the 642-residue chain is Tigger transposable element derived 5 (642 aa).

The segment at 1-54 is disordered; that stretch reads MYPASPPAGPALHPVPHRARLPQPRCLAEPPRSPAPGPGSTARPPPPPAPGPRP. Over residues 31 to 53 the composition is skewed to pro residues; that stretch reads PRSPAPGPGSTARPPPPPAPGPR. In terms of domain architecture, HTH psq-type spans 57 to 108; sequence AVKMTFRKAYSIKDKLQAIERVKGGERQASVCRDFGVPGGTLRGWLKDEPKL. DNA-binding regions (H-T-H motif) lie at residues 84-104 and 155-188; these read QASV…WLKD and PVIQ…WQKR. Residues 122 to 195 form the HTH CENPB-type domain; that stretch reads QRKKMRLANE…QKRHGISSQR (74 aa). The interval 202–238 is disordered; that stretch reads SPVAGPAPVKEEPAQSPGAVLVPDGAPATLPHSEGGY. Positions 240-365 constitute a DDE-1 domain; that stretch reads DEQIYNANVT…CLQQKAVLLV (126 aa). Disordered regions lie at residues 375–400 and 548–581; these read TSMP…SPEE and GCRE…TEQG.

The protein belongs to the tigger transposable element derived protein family.

It is found in the nucleus. This chain is Tigger transposable element derived 5 (Tigd5), found in Mus musculus (Mouse).